A 189-amino-acid polypeptide reads, in one-letter code: Isopentenyl-diphosphate Delta-isomerase (189 aa).

Residues H27 and H34 each contribute to the Mn(2+) site. Residues 32–171 (PLHFAFSTYI…PFVFSPWMVD (140 aa)) enclose the Nudix hydrolase domain. C69 is a catalytic residue. H71 lines the Mn(2+) pocket. E89 contacts Mg(2+). E119 and E121 together coordinate Mn(2+). Residue E121 is part of the active site.

Belongs to the IPP isomerase type 1 family. Mg(2+) serves as cofactor. The cofactor is Mn(2+).

The protein localises to the cytoplasm. The enzyme catalyses isopentenyl diphosphate = dimethylallyl diphosphate. It participates in isoprenoid biosynthesis; dimethylallyl diphosphate biosynthesis; dimethylallyl diphosphate from isopentenyl diphosphate: step 1/1. In terms of biological role, catalyzes the 1,3-allylic rearrangement of the homoallylic substrate isopentenyl (IPP) to its highly electrophilic allylic isomer, dimethylallyl diphosphate (DMAPP). This chain is Isopentenyl-diphosphate Delta-isomerase, found in Corynebacterium glutamicum (strain R).